We begin with the raw amino-acid sequence, 130 residues long: Large ribosomal subunit protein bL17 (130 aa).

This sequence belongs to the bacterial ribosomal protein bL17 family. Part of the 50S ribosomal subunit. Contacts protein L32.

The protein is Large ribosomal subunit protein bL17 of Nitrosomonas eutropha (strain DSM 101675 / C91 / Nm57).